The chain runs to 136 residues: Protein PsiE (136 aa).

4 consecutive transmembrane segments (helical) span residues 15 to 35 (ILQN…VVFL), 55 to 75 (YELV…ALIV), 83 to 103 (HFPL…LIIV), and 108 to 128 (PMDV…LWLC).

It belongs to the PsiE family.

The protein resides in the cell inner membrane. This chain is Protein PsiE, found in Salmonella gallinarum (strain 287/91 / NCTC 13346).